Here is a 427-residue protein sequence, read N- to C-terminus: Enolase (427 aa).

Residue glutamine 163 coordinates (2R)-2-phosphoglycerate. The active-site Proton donor is glutamate 205. Residues aspartate 242, glutamate 285, and aspartate 312 each contribute to the Mg(2+) site. The (2R)-2-phosphoglycerate site is built by lysine 337, arginine 366, serine 367, and lysine 388. Lysine 337 functions as the Proton acceptor in the catalytic mechanism.

The protein belongs to the enolase family. Mg(2+) is required as a cofactor.

Its subcellular location is the cytoplasm. It is found in the secreted. The protein localises to the cell surface. The enzyme catalyses (2R)-2-phosphoglycerate = phosphoenolpyruvate + H2O. Its pathway is carbohydrate degradation; glycolysis; pyruvate from D-glyceraldehyde 3-phosphate: step 4/5. Catalyzes the reversible conversion of 2-phosphoglycerate (2-PG) into phosphoenolpyruvate (PEP). It is essential for the degradation of carbohydrates via glycolysis. In Burkholderia vietnamiensis (strain G4 / LMG 22486) (Burkholderia cepacia (strain R1808)), this protein is Enolase.